Consider the following 331-residue polypeptide: ADP-L-glycero-D-manno-heptose-6-epimerase (331 aa).

NADP(+)-binding positions include 11-12 (FI), 32-33 (DN), K39, K54, 75-79 (EGACS), and N92. The active-site Proton acceptor is the Y139. K143 provides a ligand contact to NADP(+). N168 serves as a coordination point for substrate. NADP(+) contacts are provided by V169 and K177. Residue K177 is the Proton acceptor of the active site. Substrate contacts are provided by residues R179, H186, 200–203 (FGEY), R213, and Y292.

This sequence belongs to the NAD(P)-dependent epimerase/dehydratase family. HldD subfamily. In terms of assembly, homopentamer. Requires NADP(+) as cofactor.

It carries out the reaction ADP-D-glycero-beta-D-manno-heptose = ADP-L-glycero-beta-D-manno-heptose. It functions in the pathway nucleotide-sugar biosynthesis; ADP-L-glycero-beta-D-manno-heptose biosynthesis; ADP-L-glycero-beta-D-manno-heptose from D-glycero-beta-D-manno-heptose 7-phosphate: step 4/4. Its function is as follows. Catalyzes the interconversion between ADP-D-glycero-beta-D-manno-heptose and ADP-L-glycero-beta-D-manno-heptose via an epimerization at carbon 6 of the heptose. In Cupriavidus taiwanensis (strain DSM 17343 / BCRC 17206 / CCUG 44338 / CIP 107171 / LMG 19424 / R1) (Ralstonia taiwanensis (strain LMG 19424)), this protein is ADP-L-glycero-D-manno-heptose-6-epimerase.